We begin with the raw amino-acid sequence, 162 residues long: MALARPRPRLGDLIEISRFGYAHWAIYVGDGYVVHLAPASEIAGAGAASVLSALTNKAIVKKELLSVVAGGDNYRVNNKHDDRYTPLPSNKIVKRAEELVGQELPYSLTSDNCEHFVNHLRYGVSRSDQVTGAVTTVGVAAGLLAAASLVGILLARSKRERQ.

The Cytoplasmic portion of the chain corresponds to 1 to 133; sequence MALARPRPRL…VSRSDQVTGA (133 aa). Residues 13 to 129 form the LRAT domain; it reads LIEISRFGYA…LRYGVSRSDQ (117 aa). Active-site residues include His-23 and His-35. Cys-113 (acyl-thioester intermediate) is an active-site residue. Residues 134–154 form a helical membrane-spanning segment; it reads VTTVGVAAGLLAAASLVGILL. The Lumenal portion of the chain corresponds to 155–162; sequence ARSKRERQ.

The protein belongs to the H-rev107 family. In terms of tissue distribution, expressed in liver, kidney, small intestine testis and colon. Undetectable in testis, placenta, salivary gland and fetal brain.

Its subcellular location is the cytoplasm. The protein resides in the membrane. It catalyses the reaction a 1,2-diacyl-sn-glycero-3-phosphocholine + H2O = a 1-acyl-sn-glycero-3-phosphocholine + a fatty acid + H(+). The catalysed reaction is a 1,2-diacyl-sn-glycero-3-phosphocholine + H2O = a 2-acyl-sn-glycero-3-phosphocholine + a fatty acid + H(+). It carries out the reaction a 1,2-diacyl-sn-glycero-3-phosphoethanolamine + a 1,2-diacyl-sn-glycero-3-phosphocholine = an N-acyl-1,2-diacyl-sn-glycero-3-phosphoethanolamine + a 1-acyl-sn-glycero-3-phosphocholine + H(+). The enzyme catalyses a 1,2-diacyl-sn-glycero-3-phosphoethanolamine + a 1,2-diacyl-sn-glycero-3-phosphocholine = an N-acyl-1,2-diacyl-sn-glycero-3-phosphoethanolamine + a 2-acyl-sn-glycero-3-phosphocholine + H(+). It catalyses the reaction 1,2-dihexadecanoyl-sn-glycero-3-phosphocholine + H2O = 1-hexadecanoyl-sn-glycero-3-phosphocholine + hexadecanoate + H(+). The catalysed reaction is 1,2-dihexadecanoyl-sn-glycero-3-phosphocholine + H2O = 2-hexadecanoyl-sn-glycero-3-phosphocholine + hexadecanoate + H(+). It carries out the reaction 1-hexadecanoyl-2-(9Z-octadecenoyl)-sn-glycero-3-phosphocholine + H2O = 2-(9Z-octadecenoyl)-sn-glycero-3-phosphocholine + hexadecanoate + H(+). The enzyme catalyses 1-hexadecanoyl-2-(9Z-octadecenoyl)-sn-glycero-3-phosphocholine + H2O = 1-hexadecanoyl-sn-glycero-3-phosphocholine + (9Z)-octadecenoate + H(+). It catalyses the reaction 1-hexadecanoyl-2-(5Z,8Z,11Z,14Z-eicosatetraenoyl)-sn-glycero-3-phosphocholine + H2O = 2-(5Z,8Z,11Z,14Z)-eicosatetraenoyl-sn-glycero-3-phosphocholine + hexadecanoate + H(+). The catalysed reaction is 1-hexadecanoyl-2-(9Z,12Z-octadecadienoyl)-sn-glycero-3-phosphoethanolamine + H2O = 1-hexadecanoyl-sn-glycero-3-phosphoethanolamine + (9Z,12Z)-octadecadienoate + H(+). It carries out the reaction 1-hexadecanoyl-2-(9Z,12Z-octadecadienoyl)-sn-glycero-3-phosphoethanolamine + H2O = 2-(9Z,12Z)-octadecadienoyl-sn-glycero-3-phosphoethanolamine + hexadecanoate + H(+). The enzyme catalyses 1-hexadecanoyl-2-(5Z,8Z,11Z,14Z-eicosatetraenoyl)-sn-glycero-3-phosphoethanolamine + H2O = 1-hexadecanoyl-sn-glycero-3-phosphoethanolamine + (5Z,8Z,11Z,14Z)-eicosatetraenoate + H(+). It catalyses the reaction 1-hexadecanoyl-2-(5Z,8Z,11Z,14Z-eicosatetraenoyl)-sn-glycero-3-phosphoethanolamine + H2O = 2-(5Z,8Z,11Z,14Z)-eicosatetraenoyl-sn-glycero-3-phosphoethanolamine + hexadecanoate + H(+). The catalysed reaction is 1,2-di-(9Z-octadecenoyl)-sn-glycero-3-phosphoethanolamine + 1,2-dihexadecanoyl-sn-glycero-3-phosphocholine = N-hexadecanoyl-1,2-di-(9Z-octadecenoyl)-sn-glycero-3-phosphoethanolamine + 2-hexadecanoyl-sn-glycero-3-phosphocholine + H(+). It carries out the reaction 1,2-di-(9Z-octadecenoyl)-sn-glycero-3-phosphoethanolamine + 1,2-dihexadecanoyl-sn-glycero-3-phosphocholine = N-hexadecanoyl-1,2-di-(9Z-octadecenoyl)-sn-glycero-3-phosphoethanolamine + 1-hexadecanoyl-sn-glycero-3-phosphocholine + H(+). The enzyme catalyses 1-hexanoyl-2-acyl-sn-glycero-3-phosphocholine + H2O = 1-hexanoyl-sn-glycero-3-phosphocholine + a fatty acid + H(+). It catalyses the reaction 1,2-diheptadecanoyl-sn-glycero-3-phosphoethanolamine + 1-(9Z-octadecenoyl)-2-hexadecanoyl-sn-glycero-3-phosphocholine = 1,2-diheptadecanoyl-sn-glycero-3-phospho-N-hexadecanoyl-ethanolamine + 1-(9Z-octadecenoyl)-sn-glycero-3-phosphocholine + H(+). The catalysed reaction is 1,2-diheptadecanoyl-sn-glycero-3-phosphoethanolamine + 1-(9Z-octadecenoyl)-2-hexadecanoyl-sn-glycero-3-phosphocholine = 1,2-diheptadecanoyl-sn-glycero-3-phospho-N-(9Z-octadecenoyl)-ethanolamine + 2-hexadecanoyl-sn-glycero-3-phosphocholine + H(+). It carries out the reaction 1,2-dihexanoyl-sn-glycero-3-phosphocholine + 1,2-diheptanoyl-sn-glycero-3-phosphocholine = 1-heptanoyl-2-hexanoyl-sn-glycero-3-phosphocholine + 1-hexanoyl-2-heptanoyl-sn-glycero-3-phosphocholine. The enzyme catalyses 1,2-diheptanoyl-sn-glycero-3-phosphocholine + 1,2-dihexadecanoyl-sn-glycero-3-phosphocholine = 1-hexadecanoyl-2-heptanoyl-sn-glycero-3-phosphocholine + 1-heptanoyl-2-hexadecanoyl-sn-glycero-3-phosphocholine. It catalyses the reaction 1,2-dihexanoyl-sn-glycero-3-phosphoethanolamine + 1,2-diheptanoyl-sn-glycero-3-phosphocholine = 1-heptanoyl-2-hexanoyl-sn-glycero-3-phosphoethanolamine + 1-hexanoyl-2-heptanoyl-sn-glycero-3-phosphocholine. The catalysed reaction is 1-hexanoyl-2-acyl-sn-glycero-3-phosphocholine + H2O = hexanoate + a 2-acyl-sn-glycero-3-phosphocholine + H(+). It carries out the reaction 1,2-dihexanoyl-sn-glycero-3-phosphoethanolamine + 2-heptanoyl-sn-glycero-3-phosphocholine = hexanoyl-sn-glycero-3-phosphoethanolamine + 1-hexanoyl-2-heptanoyl-sn-glycero-3-phosphocholine. Its function is as follows. Exhibits both phospholipase A1/2 and acyltransferase activities. Shows phospholipase A1 (PLA1) and A2 (PLA2) activity, catalyzing the calcium-independent release of fatty acids from the sn-1 or sn-2 position of glycerophospholipids. For most substrates, PLA1 activity is much higher than PLA2 activity. Shows O-acyltransferase activity, catalyzing the transfer of a fatty acyl group from glycerophospholipid to the hydroxyl group of lysophospholipid. Shows N-acyltransferase activity, catalyzing the calcium-independent transfer of a fatty acyl group at the sn-1 position of phosphatidylcholine (PC) and other glycerophospholipids to the primary amine of phosphatidylethanolamine (PE), forming N-acylphosphatidylethanolamine (NAPE), which serves as precursor for N-acylethanolamines (NAEs). Catalyzes N-acylation of PE using both sn-1 and sn-2 palmitoyl groups of PC as acyl donor. Exhibits high phospholipase A1/2 activity and low N-acyltransferase activity. The protein is Phospholipase A and acyltransferase 2 of Homo sapiens (Human).